Consider the following 195-residue polypeptide: MKSLEELYNRAIEMKNKGMSDKEISTELHLSVNTVTWLLSKEFVNERSAKDVKIGWRSAGVFGSRIGSLAEIMIDIAEEESNKMNLNIDAFLGITINGIPFATLASYMTGKELIVYRPHPSRKEGFFSSNFASVVNKNVVIMDDVVSTGETMKRTIEDVKKSGGKPVLCIVIASKLNIDEINGVKIRAIMRTVMV.

It belongs to the purine/pyrimidine phosphoribosyltransferase family. GfcR subfamily.

The chain is Transcriptional regulator GfcR from Picrophilus torridus (strain ATCC 700027 / DSM 9790 / JCM 10055 / NBRC 100828 / KAW 2/3).